The chain runs to 248 residues: MATETIAMDWVDIGTNGESRLAYLARPVVTGRLPAVIVMPAIHGINTYIKDVAIDLAKAGFVALLIDIHSPEQEPDLSNAEKIQIAVETLDDRKVLKDVDAAVRYLEQHAAVRADRLGILGFCVGGTYALLAARTPAIRVSVGFYGLLEYQSRTDNKPVSPLDSVAQFTAPILFHVGDKDPWIDSKMLAEFTKRMQQHQKSYELCIYRGAGHAFHEHFRDAYRPIAAQSAWNNTLIYLRWHLCGKRTV.

Active-site residues include Cys-123, Asp-180, and His-212.

It belongs to the dienelactone hydrolase family.

It catalyses the reaction 2-oxo-3-(5-oxofuran-2-ylidene)propanoate + H2O = 3-maleylpyruvate + H(+). Functionally, involved in the 5-nitroanthranilic acid (5NAA) degradation. Catalyzes the hydrolysis of the lactone to produce maleylpyruvate biodegradation of 5-nitroanthranilate. The sequence is that of Probable 2-oxo-3-(5-oxofuran-2-ylidene)propanoate lactonase (naaC) from Bradyrhizobium sp.